Here is a 66-residue protein sequence, read N- to C-terminus: Large ribosomal subunit protein bL35 (66 aa).

This sequence belongs to the bacterial ribosomal protein bL35 family.

In Deinococcus deserti (strain DSM 17065 / CIP 109153 / LMG 22923 / VCD115), this protein is Large ribosomal subunit protein bL35.